The primary structure comprises 430 residues: Tol-Pal system protein TolB (430 aa).

Residues 1–21 (MKQALRVAFGFLMLWAAVLHA) form the signal peptide.

Belongs to the TolB family. The Tol-Pal system is composed of five core proteins: the inner membrane proteins TolA, TolQ and TolR, the periplasmic protein TolB and the outer membrane protein Pal. They form a network linking the inner and outer membranes and the peptidoglycan layer.

The protein localises to the periplasm. In terms of biological role, part of the Tol-Pal system, which plays a role in outer membrane invagination during cell division and is important for maintaining outer membrane integrity. TolB occupies a key intermediary position in the Tol-Pal system because it communicates directly with both membrane-embedded components, Pal in the outer membrane and TolA in the inner membrane. The chain is Tol-Pal system protein TolB from Salmonella enteritidis PT4 (strain P125109).